The chain runs to 267 residues: Undecaprenyl-diphosphatase (267 aa).

The next 8 membrane-spanning stretches (helical) occupy residues 1-21 (MSYF…FLPI), 39-59 (QGLA…VIYF), 83-103 (AKLA…GLLM), 111-131 (LRSA…LWWV), 144-164 (AGWK…IPGT), 189-209 (FLMS…KLVT), 218-238 (TLLT…HFFL), and 246-266 (MTPF…FLMM).

Belongs to the UppP family.

The protein localises to the cell inner membrane. It catalyses the reaction di-trans,octa-cis-undecaprenyl diphosphate + H2O = di-trans,octa-cis-undecaprenyl phosphate + phosphate + H(+). Functionally, catalyzes the dephosphorylation of undecaprenyl diphosphate (UPP). Confers resistance to bacitracin. The protein is Undecaprenyl-diphosphatase of Vibrio atlanticus (strain LGP32) (Vibrio splendidus (strain Mel32)).